Here is a 495-residue protein sequence, read N- to C-terminus: RuBisCO large subunit-binding protein subunit alpha (495 aa).

Belongs to the chaperonin (HSP60) family. In terms of assembly, oligomer of probably six alpha and six beta subunits.

The protein localises to the plastid. It is found in the chloroplast. Functionally, this protein binds RuBisCO small and large subunits and is implicated in the assembly of the enzyme oligomer. This chain is RuBisCO large subunit-binding protein subunit alpha, found in Ricinus communis (Castor bean).